The sequence spans 406 residues: Probable tRNA sulfurtransferase (406 aa).

The region spanning Asp60–Thr166 is the THUMP domain. ATP-binding positions include Met184 to Met185, His209 to Phe210, Arg266, Gly288, and Gln297.

Belongs to the ThiI family.

It localises to the cytoplasm. The enzyme catalyses [ThiI sulfur-carrier protein]-S-sulfanyl-L-cysteine + a uridine in tRNA + 2 reduced [2Fe-2S]-[ferredoxin] + ATP + H(+) = [ThiI sulfur-carrier protein]-L-cysteine + a 4-thiouridine in tRNA + 2 oxidized [2Fe-2S]-[ferredoxin] + AMP + diphosphate. The catalysed reaction is [ThiS sulfur-carrier protein]-C-terminal Gly-Gly-AMP + S-sulfanyl-L-cysteinyl-[cysteine desulfurase] + AH2 = [ThiS sulfur-carrier protein]-C-terminal-Gly-aminoethanethioate + L-cysteinyl-[cysteine desulfurase] + A + AMP + 2 H(+). It participates in cofactor biosynthesis; thiamine diphosphate biosynthesis. In terms of biological role, catalyzes the ATP-dependent transfer of a sulfur to tRNA to produce 4-thiouridine in position 8 of tRNAs, which functions as a near-UV photosensor. Also catalyzes the transfer of sulfur to the sulfur carrier protein ThiS, forming ThiS-thiocarboxylate. This is a step in the synthesis of thiazole, in the thiamine biosynthesis pathway. The sulfur is donated as persulfide by IscS. In Limosilactobacillus reuteri subsp. reuteri (strain JCM 1112) (Lactobacillus reuteri), this protein is Probable tRNA sulfurtransferase.